A 99-amino-acid polypeptide reads, in one-letter code: Aspartyl/glutamyl-tRNA(Asn/Gln) amidotransferase subunit C (99 aa).

The protein belongs to the GatC family. Heterotrimer of A, B and C subunits.

It catalyses the reaction L-glutamyl-tRNA(Gln) + L-glutamine + ATP + H2O = L-glutaminyl-tRNA(Gln) + L-glutamate + ADP + phosphate + H(+). The enzyme catalyses L-aspartyl-tRNA(Asn) + L-glutamine + ATP + H2O = L-asparaginyl-tRNA(Asn) + L-glutamate + ADP + phosphate + 2 H(+). Allows the formation of correctly charged Asn-tRNA(Asn) or Gln-tRNA(Gln) through the transamidation of misacylated Asp-tRNA(Asn) or Glu-tRNA(Gln) in organisms which lack either or both of asparaginyl-tRNA or glutaminyl-tRNA synthetases. The reaction takes place in the presence of glutamine and ATP through an activated phospho-Asp-tRNA(Asn) or phospho-Glu-tRNA(Gln). In Macrococcus caseolyticus (strain JCSC5402) (Macrococcoides caseolyticum), this protein is Aspartyl/glutamyl-tRNA(Asn/Gln) amidotransferase subunit C.